Consider the following 433-residue polypeptide: ATP-dependent protease ATPase subunit HslU (433 aa).

Residues valine 18, 60-65, aspartate 246, glutamate 311, and arginine 383 each bind ATP; that span reads GVGKTE.

The protein belongs to the ClpX chaperone family. HslU subfamily. In terms of assembly, a double ring-shaped homohexamer of HslV is capped on each side by a ring-shaped HslU homohexamer. The assembly of the HslU/HslV complex is dependent on binding of ATP.

The protein localises to the cytoplasm. In terms of biological role, ATPase subunit of a proteasome-like degradation complex; this subunit has chaperone activity. The binding of ATP and its subsequent hydrolysis by HslU are essential for unfolding of protein substrates subsequently hydrolyzed by HslV. HslU recognizes the N-terminal part of its protein substrates and unfolds these before they are guided to HslV for hydrolysis. The chain is ATP-dependent protease ATPase subunit HslU from Rhodopseudomonas palustris (strain HaA2).